Reading from the N-terminus, the 365-residue chain is Protein RecA (365 aa).

ATP is bound at residue 73 to 80; sequence GPESSGKT.

The protein belongs to the RecA family.

It is found in the cytoplasm. Its function is as follows. Can catalyze the hydrolysis of ATP in the presence of single-stranded DNA, the ATP-dependent uptake of single-stranded DNA by duplex DNA, and the ATP-dependent hybridization of homologous single-stranded DNAs. It interacts with LexA causing its activation and leading to its autocatalytic cleavage. This chain is Protein RecA, found in Prochlorococcus marinus (strain MIT 9215).